The sequence spans 463 residues: A-type ATP synthase subunit B (463 aa).

Belongs to the ATPase alpha/beta chains family. In terms of assembly, has multiple subunits with at least A(3), B(3), C, D, E, F, H, I and proteolipid K(x).

It is found in the cell membrane. Functionally, component of the A-type ATP synthase that produces ATP from ADP in the presence of a proton gradient across the membrane. The B chain is a regulatory subunit. The chain is A-type ATP synthase subunit B from Saccharolobus islandicus (strain Y.N.15.51 / Yellowstone #2) (Sulfolobus islandicus).